A 415-amino-acid chain; its full sequence is Probable glucuronosyltransferase Os03g0287800 (415 aa).

Residues 1-25 (MGSSTDHGGAGGRGKKGSGSQLWKK) lie on the Cytoplasmic side of the membrane. The helical; Signal-anchor for type II membrane protein transmembrane segment at 26–43 (ALLHSSLCFVMGFFTGFA) threads the bilayer. Residues 44-415 (PSSVSDWTSA…GGRFLSGDFC (372 aa)) are Lumenal-facing. N-linked (GlcNAc...) asparagine glycans are attached at residues asparagine 78, asparagine 165, asparagine 257, and asparagine 287.

This sequence belongs to the glycosyltransferase 43 family.

Its subcellular location is the golgi apparatus membrane. Functionally, involved in the synthesis of glucuronoxylan hemicellulose in secondary cell walls. The chain is Probable glucuronosyltransferase Os03g0287800 from Oryza sativa subsp. japonica (Rice).